A 214-amino-acid polypeptide reads, in one-letter code: Large ribosomal subunit protein uL16 (214 aa).

Arginine 32 bears the Citrulline mark. A Glycyl lysine isopeptide (Lys-Gly) (interchain with G-Cter in SUMO2) cross-link involves residue lysine 175. A Glycyl lysine isopeptide (Lys-Gly) (interchain with G-Cter in ubiquitin) cross-link involves residue lysine 188.

The protein belongs to the universal ribosomal protein uL16 family. Component of the large ribosomal subunit. Mature ribosomes consist of a small (40S) and a large (60S) subunit. The 40S subunit contains about 33 different proteins and 1 molecule of RNA (18S). The 60S subunit contains about 49 different proteins and 3 molecules of RNA (28S, 5.8S and 5S). In terms of processing, citrullinated by PADI4. Post-translationally, ufmylated by UFL1.

The protein resides in the cytoplasm. Component of the large ribosomal subunit. Plays a role in the formation of actively translating ribosomes. May play a role in the embryonic brain development. This is Large ribosomal subunit protein uL16 from Rattus norvegicus (Rat).